The following is a 580-amino-acid chain: MSENRNEGSSQAAKANSDTQTPSHFKVTHPRLRDQLKKKSSKKKGFKFVQEKMLKFQHVIRNQFLQQISQQMQCVPPGDQQCTQTSRKRKKMGYLLSQMVNFLWSNTVKKLKFKVPLPCLDSRCGIKVGHQTLSPWQTGQSRPSLGGFEAALASCTLSKRGAGIYESYHLSFQSYEAYQADKYHKDKNPSGYINLSTSENKLCLDLITARLTQSDMNLLDEAQLQYSDWKGQPFLREELASFLTHYCKAPTPLDPENVVVLNGCSSVFASLAMVLCDPGDALLIPTPCYNGFVFSSHLYSKIELIPVHLESQVPRSNLDSFQLTVDKLKLALTQAKKKAKKVKGLVLINPQNPLGDVYTQSSLQEYLVFAKTHKLHVIMDEIYMLSVFEPSVTFHSVLSIKDLPDPNMTHMIWGTSKDFGMSGIRFGVLYTHNKEVASAMKAFGYHHGVSGITQYKLCRLLQDKEWISKVYLPKNHSRLQKAYSYITKILKDLKIPFYNGGSGLFVWINLKAYLSPCTFDQEQILHQRFRDKKLLLSSGKSYMCIEPGWFRLVFAETHLHLQVAMDRFCHVLAEHKKHEK.

A disordered region spans residues 1–43 (MSENRNEGSSQAAKANSDTQTPSHFKVTHPRLRDQLKKKSSKK). Over residues 7 to 23 (EGSSQAAKANSDTQTPS) the composition is skewed to polar residues. Lysine 417 is subject to N6-(pyridoxal phosphate)lysine.

The protein belongs to the class-I pyridoxal-phosphate-dependent aminotransferase family.

This chain is Probable inactive 1-aminocyclopropane-1-carboxylate synthase-like protein 2 (Accsl), found in Mus musculus (Mouse).